Reading from the N-terminus, the 241-residue chain is Biosynthetic peptidoglycan transglycosylase (241 aa).

The chain crosses the membrane as a helical span at residues 19–39 (AILAVLGVWIAGILLFSVMPV).

This sequence belongs to the glycosyltransferase 51 family.

The protein localises to the cell inner membrane. The catalysed reaction is [GlcNAc-(1-&gt;4)-Mur2Ac(oyl-L-Ala-gamma-D-Glu-L-Lys-D-Ala-D-Ala)](n)-di-trans,octa-cis-undecaprenyl diphosphate + beta-D-GlcNAc-(1-&gt;4)-Mur2Ac(oyl-L-Ala-gamma-D-Glu-L-Lys-D-Ala-D-Ala)-di-trans,octa-cis-undecaprenyl diphosphate = [GlcNAc-(1-&gt;4)-Mur2Ac(oyl-L-Ala-gamma-D-Glu-L-Lys-D-Ala-D-Ala)](n+1)-di-trans,octa-cis-undecaprenyl diphosphate + di-trans,octa-cis-undecaprenyl diphosphate + H(+). The protein operates within cell wall biogenesis; peptidoglycan biosynthesis. Functionally, peptidoglycan polymerase that catalyzes glycan chain elongation from lipid-linked precursors. This chain is Biosynthetic peptidoglycan transglycosylase, found in Cronobacter sakazakii (strain ATCC BAA-894) (Enterobacter sakazakii).